An 88-amino-acid polypeptide reads, in one-letter code: Conotoxin VxVIB (88 aa).

A signal peptide spans 1–22 (MNLACVLIVAVLFLTASQLATA). Residues 23–52 (ASYARDKQEYPAVRSSDEMQDSEDLTLTKE) constitute a propeptide that is removed on maturation. Cystine bridges form between Cys-53-Cys-68, Cys-60-Cys-72, and Cys-67-Cys-81.

Expressed by the venom duct.

It localises to the secreted. In terms of biological role, may act as a neurotoxin, but produces no obvious effect on ionic currents when tested on the mouse dorsal rooted ganglia (DRG). The protein is Conotoxin VxVIB of Conus vexillum (Flag cone).